The sequence spans 149 residues: MERTFVMVKPDGVQRGLVGDVIRRFEAKGFKLVGLKLVSVSRELAEQHYGVHRERPFFGSLVEFIISVPVVAMVWEGKGAIAAARKIIGATNPLEAEPGTIRGDFGVDIGRNLIHGSDGPDTAASEIALWFSESELANWEPATKAWLYE.

Residues lysine 9, phenylalanine 57, arginine 85, threonine 91, arginine 102, and asparagine 112 each contribute to the ATP site. The Pros-phosphohistidine intermediate role is filled by histidine 115.

The protein belongs to the NDK family. As to quaternary structure, homotetramer. Mg(2+) is required as a cofactor.

Its subcellular location is the cytoplasm. It carries out the reaction dZDP + ATP = dZTP + ADP. The enzyme catalyses a 2'-deoxyribonucleoside 5'-diphosphate + ATP = a 2'-deoxyribonucleoside 5'-triphosphate + ADP. The catalysed reaction is a ribonucleoside 5'-diphosphate + ATP = a ribonucleoside 5'-triphosphate + ADP. Its pathway is purine metabolism. Major role in the synthesis of nucleoside triphosphates other than ATP. The ATP gamma phosphate is transferred to the NDP beta phosphate via a ping-pong mechanism, using a phosphorylated active-site intermediate. In terms of biological role, (Microbial infection) Catalyzes the phosphorylation of dZDP to dZTP, when the bacterium is infected by a phage that produces the substrate for the synthesis of dZTP (2- amino-2'-deoxyadenosine 5'-triphosphate), which is then used by the phage as a DNA polymerase substrate. The protein is Nucleoside diphosphate kinase of Picosynechococcus sp. (strain ATCC 27264 / PCC 7002 / PR-6) (Agmenellum quadruplicatum).